An 86-amino-acid chain; its full sequence is Large ribosomal subunit protein bL27 (86 aa).

A compositionally biased stretch (gly residues) spans Met1 to Thr10. Residues Met1–Gly22 are disordered.

Belongs to the bacterial ribosomal protein bL27 family.

In Polynucleobacter asymbioticus (strain DSM 18221 / CIP 109841 / QLW-P1DMWA-1) (Polynucleobacter necessarius subsp. asymbioticus), this protein is Large ribosomal subunit protein bL27.